The following is a 437-amino-acid chain: Xylose isomerase (437 aa).

Residues histidine 101 and aspartate 104 contribute to the active site. 7 residues coordinate Mg(2+): glutamate 232, glutamate 268, histidine 271, aspartate 296, aspartate 307, aspartate 309, and aspartate 339.

This sequence belongs to the xylose isomerase family. As to quaternary structure, homotetramer. Requires Mg(2+) as cofactor.

It localises to the cytoplasm. The catalysed reaction is alpha-D-xylose = alpha-D-xylulofuranose. The sequence is that of Xylose isomerase from Actinobacillus succinogenes (strain ATCC 55618 / DSM 22257 / CCUG 43843 / 130Z).